Here is a 424-residue protein sequence, read N- to C-terminus: CinA-like protein (424 aa).

Belongs to the CinA family.

The sequence is that of CinA-like protein from Shewanella amazonensis (strain ATCC BAA-1098 / SB2B).